The chain runs to 763 residues: Pentatricopeptide repeat-containing protein At4g32430, mitochondrial (763 aa).

The N-terminal 38 residues, 1-38 (MTLLNYLHCNRSKSFLFQRFYSPYRIAHKLFDGSSQRN), are a transit peptide targeting the mitochondrion. 17 PPR repeats span residues 77–109 (DEVTLCLALKACRGDLKRGCQIHGFSTTSGFTS), 110–140 (FVCVSNAVMGMYRKAGRFDNALCIFENLVDP), 141–172 (DVVSWNTILSGFDDNQIALNFVVRMKSAGVVF), 173–207 (DAFTYSTALSFCVGSEGFLLGLQLQSTVVKTGLES), 208–238 (DLVVGNSFITMYSRSGSFRGARRVFDEMSFK), 239–274 (DMISWNSLLSGLSQEGTFGFEAVVIFRDMMREGVEL), 275–309 (DHVSFTSVITTCCHETDLKLARQIHGLCIKRGYES), 310–344 (LLEVGNILMSRYSKCGVLEAVKSVFHQMSERNVVS), 350–370 (SSNKDDAVSIFLNMRFDGVYP), 371–405 (NEVTFVGLINAVKCNEQIKEGLKIHGLCIKTGFVS), 406–436 (EPSVGNSFITLYAKFEALEDAKKAFEDITFR), 437–471 (EIISWNAMISGFAQNGFSHEALKMFLSAAAETMPN), 472–507 (EYTFGSVLNAIAFAEDISVKQGQRCHAHLLKLGLNS), 508–538 (CPVVSSALLDMYAKRGNIDESEKVFNEMSQK), 539–573 (NQFVWTSIISAYSSHGDFETVMNLFHKMIKENVAP), 574–604 (DLVTFLSVLTACNRKGMVDKGYEIFNMMIEV), and 610–640 (SHEHYSCMVDMLGRAGRLKEAEELMSEVPGG). The tract at residues 645 to 720 (MLQSMLGSCR…EAGFSWIDVG (76 aa)) is type E motif. The segment at 724-756 (GSLTMQGFSSGDKSHPKSDEIYRMVEIIGLEMN) is type E(+) motif.

Belongs to the PPR family. PCMP-E subfamily.

It is found in the mitochondrion. This Arabidopsis thaliana (Mouse-ear cress) protein is Pentatricopeptide repeat-containing protein At4g32430, mitochondrial (PCMP-E40).